The primary structure comprises 283 residues: MAEITASLVKELRDRTGAGMMECKKALVEANGDIELAIDNMRKSGQAKAAKKAGRVAAEGVILARVENGFGVLVEMNCETDFVAKDAGFLGLANEVTDFAAANKGTTIEALQAQFEEKRAALVAKIGENMNIRRVAYLDGQVIAQYLHGAKIGVLVAGEGSADELKKVAMHVAASKPEFVNPEDVSAEVVEHERQIQIDIAINSGKPKEIAEKMVEGRMKKFTGEVSLTGQAFVMDPSVSVGDFLKSVNTSVSNFIRLEVGEGIEKKEEDFAAEVAKITGGNA.

The segment at 80–83 (TDFV) is involved in Mg(2+) ion dislocation from EF-Tu.

It belongs to the EF-Ts family.

The protein localises to the cytoplasm. Associates with the EF-Tu.GDP complex and induces the exchange of GDP to GTP. It remains bound to the aminoacyl-tRNA.EF-Tu.GTP complex up to the GTP hydrolysis stage on the ribosome. The chain is Elongation factor Ts from Haemophilus influenzae (strain PittEE).